The following is a 278-amino-acid chain: Delta(3,5)-Delta(2,4)-dienoyl-CoA isomerase, peroxisomal (278 aa).

Residue Met-1 is modified to N-acetylmethionine. Residues 69–73 and Gly-128 contribute to the substrate site; that span reads SGIDL. Residues 276-278 carry the Microbody targeting signal motif; that stretch reads AKL.

It belongs to the enoyl-CoA hydratase/isomerase family. As to expression, expressed in roots, leaves, stems and flowers.

The protein localises to the peroxisome. It catalyses the reaction a (3E,5Z)-dienoyl-CoA = a (2E,4E)-(5,6-saturated)-dienoyl-CoA. The protein operates within lipid metabolism; fatty acid beta-oxidation. Functionally, converts 3,5-dienoyl-CoAs to the corresponding 2,4-dienoyl-CoAs. Involved in degradation of unsaturated fatty acids. The sequence is that of Delta(3,5)-Delta(2,4)-dienoyl-CoA isomerase, peroxisomal from Arabidopsis thaliana (Mouse-ear cress).